Here is a 140-residue protein sequence, read N- to C-terminus: Putative pre-16S rRNA nuclease (140 aa).

The protein belongs to the YqgF nuclease family.

It localises to the cytoplasm. Functionally, could be a nuclease involved in processing of the 5'-end of pre-16S rRNA. This chain is Putative pre-16S rRNA nuclease, found in Halalkalibacterium halodurans (strain ATCC BAA-125 / DSM 18197 / FERM 7344 / JCM 9153 / C-125) (Bacillus halodurans).